We begin with the raw amino-acid sequence, 268 residues long: Glutamate racemase (268 aa).

Substrate contacts are provided by residues 10 to 11 (DS) and 42 to 43 (YG). Catalysis depends on cysteine 73, which acts as the Proton donor/acceptor. A substrate-binding site is contributed by 74–75 (NT). Cysteine 184 serves as the catalytic Proton donor/acceptor. A substrate-binding site is contributed by 185–186 (TH).

The protein belongs to the aspartate/glutamate racemases family.

The catalysed reaction is L-glutamate = D-glutamate. The protein operates within cell wall biogenesis; peptidoglycan biosynthesis. In terms of biological role, provides the (R)-glutamate required for cell wall biosynthesis. The sequence is that of Glutamate racemase from Carnobacterium sp. (strain St2).